Reading from the N-terminus, the 301-residue chain is Formylmethanofuran--tetrahydromethanopterin formyltransferase (301 aa).

It belongs to the FTR family. As to quaternary structure, homotetramer.

It localises to the cytoplasm. The enzyme catalyses N-formylmethanofuran + 5,6,7,8-tetrahydromethanopterin + H(+) = N(5)-formyl-5,6,7,8-tetrahydromethanopterin + methanofuran. It participates in one-carbon metabolism; methanogenesis from CO(2); 5,10-methenyl-5,6,7,8-tetrahydromethanopterin from CO(2): step 2/3. In terms of biological role, catalyzes the reversible transfer of a formyl group from formylmethanofuran (formyl-MFR) to tetrahydromethanopterin (H(4)MPT) to produce 5-formyl tetrahydromethanopterin (5-formyl-H(4)MPT) and methanofuran (MFR). This Methanocaldococcus jannaschii (strain ATCC 43067 / DSM 2661 / JAL-1 / JCM 10045 / NBRC 100440) (Methanococcus jannaschii) protein is Formylmethanofuran--tetrahydromethanopterin formyltransferase.